Consider the following 95-residue polypeptide: Osteocalcin 1 (95 aa).

The first 21 residues, 1-21 (MKTLSVLVLCSLAVLCLTSDA), serve as a signal peptide directing secretion. The propeptide occupies 22–50 (SFSSQPAVDTPAQEGLFVEQEQASSVVRQ). Residues 45-91 (SSVVRQAPKELSLSQLESLREVCELNLACEDMMDTSGIIAAYTTYYG) form the Gla domain. Ca(2+) contacts are provided by Glu61, Glu65, and Glu68. Residues Glu61, Glu65, and Glu68 each carry the 4-carboxyglutamate modification. Cys67 and Cys73 are disulfide-bonded.

It belongs to the osteocalcin/matrix Gla protein family. Post-translationally, gamma-carboxyglutamate residues are formed by vitamin K dependent carboxylation by GGCX. These residues are essential for the binding of calcium.

The protein resides in the secreted. Functionally, the carboxylated form is one of the main organic components of the bone matrix, which constitutes 1-2% of the total bone protein. The carboxylated form binds strongly to apatite and calcium. This is Osteocalcin 1 from Solea senegalensis (Senegalese sole).